The following is a 288-amino-acid chain: Cyclin-dependent kinase 2 homolog (288 aa).

In terms of domain architecture, Protein kinase spans 4 to 284; the sequence is YHGLEKIGEG…AKQAIEHPYF (281 aa). ATP-binding positions include 10-18 and Lys32; that span reads IGEGTYGVV. Phosphothreonine is present on Thr14. At Tyr15 the chain carries Phosphotyrosine. Residue Asp125 is the Proton acceptor of the active site. The residue at position 158 (Thr158) is a Phosphothreonine.

It belongs to the protein kinase superfamily. CMGC Ser/Thr protein kinase family. CDC2/CDKX subfamily. May form a complex composed of at least the catalytic subunit CRK2 and a cyclin. It depends on Mg(2+) as a cofactor.

The protein resides in the cytoplasm. The catalysed reaction is L-seryl-[protein] + ATP = O-phospho-L-seryl-[protein] + ADP + H(+). It catalyses the reaction L-threonyl-[protein] + ATP = O-phospho-L-threonyl-[protein] + ADP + H(+). The enzyme catalyses [DNA-directed RNA polymerase] + ATP = phospho-[DNA-directed RNA polymerase] + ADP + H(+). Phosphorylation at Thr-14 or Tyr-15 inactivates the enzyme, while phosphorylation at Thr-158 activates it. Serine/threonine-protein kinase. Involved in the control of the cell cycle. Required for entry into S-phase and mitosis. Probable component of the kinase complex that phosphorylates the repetitive C-terminus of RNA polymerase II. This chain is Cyclin-dependent kinase 2 homolog, found in Plasmodium berghei (strain Anka).